The primary structure comprises 108 residues: Cell division topological specificity factor (108 aa).

This sequence belongs to the MinE family.

Its function is as follows. Prevents the cell division inhibition by proteins MinC and MinD at internal division sites while permitting inhibition at polar sites. This ensures cell division at the proper site by restricting the formation of a division septum at the midpoint of the long axis of the cell. The sequence is that of Cell division topological specificity factor from Prochlorococcus marinus (strain AS9601).